A 405-amino-acid chain; its full sequence is Argininosuccinate synthase (405 aa).

Residues 11–19 and Ala38 contribute to the ATP site; that span reads AYSGGLDTS. Tyr91 and Ser96 together coordinate L-citrulline. Gly121 contacts ATP. Positions 123, 127, and 128 each coordinate L-aspartate. L-citrulline is bound at residue Asn127. L-citrulline is bound by residues Arg131, Ser182, Ser191, Glu267, and Tyr279.

This sequence belongs to the argininosuccinate synthase family. Type 1 subfamily. In terms of assembly, homotetramer.

The protein resides in the cytoplasm. The catalysed reaction is L-citrulline + L-aspartate + ATP = 2-(N(omega)-L-arginino)succinate + AMP + diphosphate + H(+). The protein operates within amino-acid biosynthesis; L-arginine biosynthesis; L-arginine from L-ornithine and carbamoyl phosphate: step 2/3. The protein is Argininosuccinate synthase of Sphingopyxis alaskensis (strain DSM 13593 / LMG 18877 / RB2256) (Sphingomonas alaskensis).